Reading from the N-terminus, the 137-residue chain is Nucleoside diphosphate kinase (137 aa).

Positions 10, 58, 86, 92, 103, and 113 each coordinate ATP. The Pros-phosphohistidine intermediate role is filled by H116.

This sequence belongs to the NDK family. As to quaternary structure, homotetramer. Mg(2+) is required as a cofactor.

The protein resides in the cytoplasm. It catalyses the reaction a 2'-deoxyribonucleoside 5'-diphosphate + ATP = a 2'-deoxyribonucleoside 5'-triphosphate + ADP. The enzyme catalyses a ribonucleoside 5'-diphosphate + ATP = a ribonucleoside 5'-triphosphate + ADP. Its function is as follows. Major role in the synthesis of nucleoside triphosphates other than ATP. The ATP gamma phosphate is transferred to the NDP beta phosphate via a ping-pong mechanism, using a phosphorylated active-site intermediate. This is Nucleoside diphosphate kinase from Helicobacter pylori (strain P12).